The sequence spans 81 residues: Acyl carrier protein (81 aa).

One can recognise a Carrier domain in the interval 4–79 (QEIFEKVQTI…QAVDFISQKV (76 aa)). Residue S39 is modified to O-(pantetheine 4'-phosphoryl)serine.

The protein belongs to the acyl carrier protein (ACP) family. 4'-phosphopantetheine is transferred from CoA to a specific serine of apo-ACP by AcpS. This modification is essential for activity because fatty acids are bound in thioester linkage to the sulfhydryl of the prosthetic group.

The protein localises to the plastid. Its subcellular location is the chloroplast. It participates in lipid metabolism; fatty acid biosynthesis. Carrier of the growing fatty acid chain in fatty acid biosynthesis. The chain is Acyl carrier protein from Guillardia theta (Cryptophyte).